A 490-amino-acid polypeptide reads, in one-letter code: Secretory immunoglobulin A-binding protein EsiB (490 aa).

The first 23 residues, 1-23, serve as a signal peptide directing secretion; sequence MKKSLLAVMLTGLFALVSLPALG. Sel1-like repeat units lie at residues 39–74, 77–109, 111–145, 153–182, 185–218, 222–254, 256–290, 291–327, 328–361, 364–397, and 399–430; these read AKAQ…EQGY, AEYV…ALKG, PQAQ…AEQG, MGDA…EQGN, SCNQ…TSGD, QLHL…EQGN, IAQF…EQGN, SDGQ…EQGD, ATAQ…AAKG, AAQF…AEQG, and SAAQ…DTAS. Mg(2+)-binding residues include His122, Glu159, and Asp161.

As to quaternary structure, interacts with human secreted IgA (SIgA) at least via resides 244-260. Mg(2+) is required as a cofactor.

It is found in the cell surface. In terms of biological role, upon host (human neutrophil) infection interferes with productive FCAR signaling, inhibiting secreted IgA (SIgA) effector functions and probably avoiding neutrophil activation. Inhibits the SIgA-mediated oxidative burst by neutrophils, decreases generation of ROS (reactive oxygen species) by neutrophils and reduces chemotaxis by neutrophils, all of which are SIgA effector functions used to stimulate the immune response. Does not block SIgA-binding to its receptor (FCAR) on neutrophils, but it decreases SIgA-stimulated phosphorylation of cytoplasmic proteins, including phospholipase C-gamma and MAP kinases, all actions that may be advantageous to the pathogen. This Escherichia coli O6:H1 (strain CFT073 / ATCC 700928 / UPEC) protein is Secretory immunoglobulin A-binding protein EsiB.